The following is a 500-amino-acid chain: Ent-cassadiene C11-alpha-hydroxylase 1 (500 aa).

The chain crosses the membrane as a helical span at residues 4-24; that stretch reads SQVWLLWGALSVAVLFYLSTL. Position 442 (cysteine 442) interacts with heme.

The protein belongs to the cytochrome P450 family. Heme serves as cofactor.

It is found in the membrane. The enzyme catalyses ent-cassa-12,15-diene + reduced [NADPH--hemoprotein reductase] + O2 = ent-11beta-hydroxycassa-12,15-diene + oxidized [NADPH--hemoprotein reductase] + H2O + H(+). In terms of biological role, enzyme of the diterpenoid metabolism involved in the biosynthesis of antibacterial oryzalides such as phytocassane. Can use ent-cassadiene as substrate, but not C11-alpha-hydroxy-ent-cassadiene, ent-pimaradiene, ent-sandaracopimaradiene, ent-kaurene, ent-isokaurene, syn-pimaradiene, syn-stemarene, syn-stemodene. The chain is Ent-cassadiene C11-alpha-hydroxylase 1 from Oryza sativa subsp. japonica (Rice).